The chain runs to 490 residues: Cytochrome P450 2C26 (490 aa).

C435 serves as a coordination point for heme.

It belongs to the cytochrome P450 family. The cofactor is heme.

It is found in the endoplasmic reticulum membrane. It localises to the microsome membrane. It carries out the reaction an organic molecule + reduced [NADPH--hemoprotein reductase] + O2 = an alcohol + oxidized [NADPH--hemoprotein reductase] + H2O + H(+). Its function is as follows. Catalyzes the hydroxylation of tolbutamide and the N-demethylation of aminopyrine and benzphetamine. The chain is Cytochrome P450 2C26 (CYP2C26) from Mesocricetus auratus (Golden hamster).